The primary structure comprises 535 residues: GMP synthase [glutamine-hydrolyzing] (535 aa).

A Glutamine amidotransferase type-1 domain is found at 21–211 (LIVILDFGSQ…VYHICDCEPT (191 aa)). Residue C98 is the Nucleophile of the active site. Active-site residues include H185 and E187. Residues 212–410 (WTTAAFVEEA…LGLPEEIVQR (199 aa)) enclose the GMPS ATP-PPase domain. 239 to 245 (SGGVDSS) provides a ligand contact to ATP.

As to quaternary structure, homodimer.

It carries out the reaction XMP + L-glutamine + ATP + H2O = GMP + L-glutamate + AMP + diphosphate + 2 H(+). It participates in purine metabolism; GMP biosynthesis; GMP from XMP (L-Gln route): step 1/1. In terms of biological role, catalyzes the synthesis of GMP from XMP. This Thermosynechococcus vestitus (strain NIES-2133 / IAM M-273 / BP-1) protein is GMP synthase [glutamine-hydrolyzing].